The primary structure comprises 191 residues: Guanylate kinase (191 aa).

The region spanning 9–187 (GQLIVITGPS…SLIALETAIF (179 aa)) is the Guanylate kinase-like domain. An ATP-binding site is contributed by 16–23 (GPSGVGKG).

It belongs to the guanylate kinase family.

The protein resides in the cytoplasm. The catalysed reaction is GMP + ATP = GDP + ADP. Functionally, essential for recycling GMP and indirectly, cGMP. This is Guanylate kinase from Thermosynechococcus vestitus (strain NIES-2133 / IAM M-273 / BP-1).